The following is a 176-amino-acid chain: Crossover junction endodeoxyribonuclease RuvC (176 aa).

Catalysis depends on residues Asp-9, Glu-69, and Asp-141. Mg(2+) is bound by residues Asp-9, Glu-69, and Asp-141.

It belongs to the RuvC family. Homodimer which binds Holliday junction (HJ) DNA. The HJ becomes 2-fold symmetrical on binding to RuvC with unstacked arms; it has a different conformation from HJ DNA in complex with RuvA. In the full resolvosome a probable DNA-RuvA(4)-RuvB(12)-RuvC(2) complex forms which resolves the HJ. It depends on Mg(2+) as a cofactor.

The protein localises to the cytoplasm. It carries out the reaction Endonucleolytic cleavage at a junction such as a reciprocal single-stranded crossover between two homologous DNA duplexes (Holliday junction).. In terms of biological role, the RuvA-RuvB-RuvC complex processes Holliday junction (HJ) DNA during genetic recombination and DNA repair. Endonuclease that resolves HJ intermediates. Cleaves cruciform DNA by making single-stranded nicks across the HJ at symmetrical positions within the homologous arms, yielding a 5'-phosphate and a 3'-hydroxyl group; requires a central core of homology in the junction. The consensus cleavage sequence is 5'-(A/T)TT(C/G)-3'. Cleavage occurs on the 3'-side of the TT dinucleotide at the point of strand exchange. HJ branch migration catalyzed by RuvA-RuvB allows RuvC to scan DNA until it finds its consensus sequence, where it cleaves and resolves the cruciform DNA. The sequence is that of Crossover junction endodeoxyribonuclease RuvC from Chromobacterium violaceum (strain ATCC 12472 / DSM 30191 / JCM 1249 / CCUG 213 / NBRC 12614 / NCIMB 9131 / NCTC 9757 / MK).